Reading from the N-terminus, the 222-residue chain is 2-C-methyl-D-erythritol 2,4-cyclodiphosphate synthase, chloroplastic (222 aa).

Residues 1-43 (MATASSLFLASPVATAPTARARSTPSASPARPSLRLRRPSTLA) constitute a chloroplast transit peptide. A divalent metal cation is bound by residues D73 and H75. Residues 73 to 75 (DLH), 99 to 100 (HS), 103 to 111 (DVLLHCVVD), 121 to 123 (DIG), 126 to 130 (FPDSD), D130, 165 to 171 (LQKPKIS), and 196 to 200 (AKTHE) contribute to the substrate site. H107 is an a divalent metal cation binding site.

It belongs to the IspF family. In terms of assembly, homotrimer. A divalent metal cation is required as a cofactor. In terms of tissue distribution, expressed in roots, leaves, stems, leaf sheaths and young panicles.

Its subcellular location is the plastid. The protein resides in the chloroplast. It carries out the reaction 4-CDP-2-C-methyl-D-erythritol 2-phosphate = 2-C-methyl-D-erythritol 2,4-cyclic diphosphate + CMP. Its pathway is isoprenoid biosynthesis; isopentenyl diphosphate biosynthesis via DXP pathway; isopentenyl diphosphate from 1-deoxy-D-xylulose 5-phosphate: step 4/6. Enzyme of the plastid non-mevalonate pathway for isoprenoid biosynthesis that converts 4-diphosphocytidyl-2C-methyl-D-erythritol 2-phosphate into 2C-methyl-D-erythritol 2,4-cyclodiphosphate and CMP. Is essential for chloroplast development. This Oryza sativa subsp. japonica (Rice) protein is 2-C-methyl-D-erythritol 2,4-cyclodiphosphate synthase, chloroplastic.